The chain runs to 267 residues: MASTEEIPRSLAGKVALITGAGRGIGKGIAIELAKRGASVIVNYNSADKPAQEVVDEIAKTGSRAIAIKADITKVPEVSRLFQEALQHFGHLDIVVSNSGTEVFKPEEEVTEEDYDRVFNLNTRAQFFVAQHAYIHLRNGGRIILMSSVAANMSGIPNHALYAGSKAAVEGFTRSFAVDAGHKKITVNAIAPGGVKTDMYDANAWHYVPGGKPGMPMEEIDKGLAAFCPLERVAVPQDIGRVVAFLAHPDSEWVNGQIILLTGGSIT.

Positions 25, 45, 71, and 98 each coordinate NADP(+). Active-site proton donor residues include Ser147 and Ser148. Positions 162, 166, 195, and 197 each coordinate NADP(+). The active-site Proton acceptor is Tyr162. The active-site Lowers pKa of active site Tyr is Lys166.

It belongs to the short-chain dehydrogenases/reductases (SDR) family.

Functionally, hydroxynaphthalene reductase-like protein; part of the Pks2 gene cluster that mediates the formation of infectious structures (appressoria), enabling these fungi to kill insects faster. The product of the Pks2 gene cluster is different from the one of Pks1 and has still not been identified. The sequence is that of Hydroxynaphthalene reductase-like protein Arp2 from Metarhizium acridum (strain CQMa 102).